Here is a 170-residue protein sequence, read N- to C-terminus: Protein SOB FIVE-LIKE 5 (170 aa).

The SOFL-A signature appears at 10 to 15 (SGWTLY). The segment at 17–78 (DQSVSSPSPS…GPRNISEEDS (62 aa)) is disordered. Residues 35-44 (DSRRRSKDSW) are compositionally biased toward basic and acidic residues. The SOFL-B signature appears at 61 to 70 (SMISDASSGP). Positions 79-86 (VKKINIVG) match the Nuclear localization signal motif.

Belongs to the SOFL plant protein family. As to expression, expressed in seedlings, roots, flowers and siliques. Barely detectable in leaves.

The protein localises to the cytoplasm. It is found in the nucleus. In terms of biological role, involved in cytokinin-mediated development. The protein is Protein SOB FIVE-LIKE 5 of Arabidopsis thaliana (Mouse-ear cress).